Reading from the N-terminus, the 127-residue chain is Protein ApaG (127 aa).

The ApaG domain occupies 3 to 127; sequence NERKYSIKVE…FILSVPRVLH (125 aa).

This is Protein ApaG from Nitrosomonas europaea (strain ATCC 19718 / CIP 103999 / KCTC 2705 / NBRC 14298).